A 264-amino-acid polypeptide reads, in one-letter code: Rhodanese-like domain-containing protein 4A, chloroplastic (264 aa).

Residues 1 to 60 constitute a chloroplast transit peptide; the sequence is MTSLPIILASSPLRNLTKPCSTSQIPKPIQNSTKQPPIHLLTKTNLSVTISQLIITSPVL. A helical transmembrane segment spans residues 95–115; it reads FFVAGCTFTYLVVYPAVMFYL. In terms of domain architecture, Rhodanese spans 132–232; that stretch reads NESDSQLLDI…ARGKNGWLAI (101 aa).

The protein localises to the plastid. The protein resides in the chloroplast. It is found in the membrane. The chain is Rhodanese-like domain-containing protein 4A, chloroplastic (STR4A) from Arabidopsis thaliana (Mouse-ear cress).